The chain runs to 210 residues: Signal peptidase complex catalytic subunit SEC11 (210 aa).

Over 1–14 (MLSSLSPHLSNVRQ) the chain is Cytoplasmic. The chain crosses the membrane as a helical; Signal-anchor for type II membrane protein span at residues 15-31 (TLTQVLNFALVLSTAFM). At 32-210 (MWKALSIYTN…MGVMVILQRE (179 aa)) the chain is on the lumenal side. A glycan (N-linked (GlcNAc...) asparagine) is linked at Asn41. Residues Ser53 and His92 each act as charge relay system in the active site. Residues 101 to 110 (DARDPKEGGG) show a composition bias toward basic and acidic residues. The tract at residues 101 to 124 (DARDPKEGGGKKGKSASGTGKKES) is disordered. The Charge relay system role is filled by Asp152. Residues 196–207 (VLLGLMGVMVIL) are C-terminal short (CTS) helix.

It belongs to the peptidase S26B family. In terms of assembly, component of the signal peptidase complex (SPC) composed of a catalytic subunit SEC11 and three accessory subunits SPC1, SPC2 and SPC3. The complex induces a local thinning of the ER membrane which is used to measure the length of the signal peptide (SP) h-region of protein substrates. This ensures the selectivity of the complex towards h-regions shorter than 18-20 amino acids. SPC associates with the translocon complex.

It is found in the endoplasmic reticulum membrane. It carries out the reaction Cleavage of hydrophobic, N-terminal signal or leader sequences from secreted and periplasmic proteins.. Functionally, catalytic component of the signal peptidase complex (SPC) which catalyzes the cleavage of N-terminal signal sequences from nascent proteins as they are translocated into the lumen of the endoplasmic reticulum. Specifically cleaves N-terminal signal peptides that contain a hydrophobic alpha-helix (h-region) shorter than 18-20 amino acids. The protein is Signal peptidase complex catalytic subunit SEC11 (SEC11) of Uncinocarpus reesii (strain UAMH 1704).